The sequence spans 197 residues: Xanthine phosphoribosyltransferase (197 aa).

Xanthine-binding residues include Leu20 and Asn27. Residue 128 to 132 (ANGQA) participates in 5-phospho-alpha-D-ribose 1-diphosphate binding. Lys156 contributes to the xanthine binding site.

Belongs to the purine/pyrimidine phosphoribosyltransferase family. Xpt subfamily. In terms of assembly, homodimer.

Its subcellular location is the cytoplasm. It carries out the reaction XMP + diphosphate = xanthine + 5-phospho-alpha-D-ribose 1-diphosphate. Its pathway is purine metabolism; XMP biosynthesis via salvage pathway; XMP from xanthine: step 1/1. Its function is as follows. Converts the preformed base xanthine, a product of nucleic acid breakdown, to xanthosine 5'-monophosphate (XMP), so it can be reused for RNA or DNA synthesis. This Bacillus cytotoxicus (strain DSM 22905 / CIP 110041 / 391-98 / NVH 391-98) protein is Xanthine phosphoribosyltransferase.